The following is a 377-amino-acid chain: Histone deacetylase 8 (377 aa).

Residues 5–336 form a histone deacetylase region; it reads RVDVFWHEGM…LHAMLEGVLK (332 aa). Residue histidine 145 is the Proton donor/acceptor of the active site. Zn(2+) contacts are provided by aspartate 182, histidine 184, and aspartate 274.

The protein belongs to the histone deacetylase family. It depends on Zn(2+) as a cofactor. In terms of tissue distribution, expressed in stems, leaves, flowers, siliques and mature seeds.

It is found in the nucleus. The protein resides in the cytoplasm. The enzyme catalyses N(6)-acetyl-L-lysyl-[histone] + H2O = L-lysyl-[histone] + acetate. Responsible for the deacetylation of lysine residues on the N-terminal part of the core histones (H2A, H2B, H3 and H4). Histone deacetylation gives a tag for epigenetic repression and plays an important role in transcriptional regulation, cell cycle progression and developmental events. Histone deacetylases act via the formation of large multiprotein complexes. The sequence is that of Histone deacetylase 8 from Arabidopsis thaliana (Mouse-ear cress).